A 152-amino-acid polypeptide reads, in one-letter code: Lipoprotein signal peptidase (152 aa).

The next 3 helical transmembrane spans lie at 5 to 25 (LFVL…FWIV), 61 to 81 (WFFV…LATH), and 84 to 104 (LNIW…GNFI). Residues aspartate 114 and aspartate 130 contribute to the active site. The helical transmembrane segment at 125–145 (IFNVADSYLTVGVILLVICLW) threads the bilayer.

This sequence belongs to the peptidase A8 family.

Its subcellular location is the cell membrane. The enzyme catalyses Release of signal peptides from bacterial membrane prolipoproteins. Hydrolyzes -Xaa-Yaa-Zaa-|-(S,diacylglyceryl)Cys-, in which Xaa is hydrophobic (preferably Leu), and Yaa (Ala or Ser) and Zaa (Gly or Ala) have small, neutral side chains.. It functions in the pathway protein modification; lipoprotein biosynthesis (signal peptide cleavage). Its function is as follows. This protein specifically catalyzes the removal of signal peptides from prolipoproteins. The protein is Lipoprotein signal peptidase of Streptococcus pyogenes serotype M6 (strain ATCC BAA-946 / MGAS10394).